Here is a 427-residue protein sequence, read N- to C-terminus: 2-oxoglutarate and iron-dependent oxygenase JMJD4 (427 aa).

One can recognise a JmjC domain in the interval 147–306 (SLVNDLEDIF…NMWHFLQQEL (160 aa)). 3 residues coordinate Fe cation: His-194, Asp-196, and His-274.

The protein belongs to the JMJD6 family. Interacts with ETF1. Interacts with the ETF1-GSPT1 complex. It depends on Fe(2+) as a cofactor.

Its subcellular location is the cytoplasm. It carries out the reaction L-lysyl-[protein] + 2-oxoglutarate + O2 = 4-hydroxy-L-lysyl-[protein] + succinate + CO2. Its function is as follows. Catalyzes the 2-oxoglutarate and iron-dependent C4-lysyl hydroxylation of ETF1 at 'Lys-63' thereby promoting the translational termination efficiency of ETF1. Not essential for embryonic stem cell (ESC) maintenance and the embryonic and postnatal development. In Mus musculus (Mouse), this protein is 2-oxoglutarate and iron-dependent oxygenase JMJD4 (Jmjd4).